The primary structure comprises 369 residues: Septin-5 (369 aa).

A Phosphothreonine modification is found at threonine 13. Residues 41–314 (KGFDFTLMVA…ENYRAHCIQQ (274 aa)) enclose the Septin-type G domain. The tract at residues 51 to 58 (GESGLGKS) is G1 motif. GTP-binding positions include 51 to 58 (GESGLGKS), threonine 85, and glycine 111. The G3 motif stretch occupies residues 108–111 (DTPG). The residue at position 168 (arginine 168) is an Omega-N-methylarginine. Positions 189–192 (AKAD) are G4 motif. GTP is bound at residue 190-198 (KADCLVPSE). Position 225 is a phosphoserine (serine 225). The GTP site is built by glycine 248 and arginine 263. At serine 327 the chain carries Phosphoserine. Threonine 336 is subject to Phosphothreonine. Residues 338–369 (DSETEKLIRMKDEELRRMQEMLQKMKQRMQDQ) adopt a coiled-coil conformation.

Belongs to the TRAFAC class TrmE-Era-EngA-EngB-Septin-like GTPase superfamily. Septin GTPase family. Septins polymerize into heterooligomeric protein complexes that form filaments, and can associate with cellular membranes, actin filaments and microtubules. GTPase activity is required for filament formation. Interacts with SEPTIN2 and SEPTIN5. In platelets, associated with a complex containing STX4. Interacts with PRKN; this interaction leads to SEPTIN5 ubiquitination and degradation. Interacts with DYRK1A. Interacts with STX1A; in the cerebellar cortex. Post-translationally, phosphorylated by DYRK1A. In terms of tissue distribution, expressed in brain and testis and at lower level in heart, spleen, lung and kidney.

It localises to the cytoplasm. Its subcellular location is the cytoskeleton. Functionally, filament-forming cytoskeletal GTPase. May play a role in cytokinesis (Potential). May play a role in platelet secretion. This chain is Septin-5, found in Rattus norvegicus (Rat).